Reading from the N-terminus, the 501-residue chain is Geissoschizine oxidase (501 aa).

The helical transmembrane segment at 1–21 (MEFSFSSPLLYILYFLLFFIV) threads the bilayer. Residue Cys442 coordinates heme.

The protein belongs to the cytochrome P450 family. The cofactor is heme.

Its subcellular location is the membrane. The enzyme catalyses (19E)-geissoschizine + reduced [NADPH--hemoprotein reductase] + O2 = akuammicine + formate + oxidized [NADPH--hemoprotein reductase] + H2O + H(+). Its pathway is alkaloid biosynthesis. Its function is as follows. A cytochrome P450 monooxygenase involved in the biosynthesis of strychnos monoterpene indole alkaloids (MIAs) natural products, compounds with effects on glucose absorption. Catalyzes the conversion of geissoschizine to akuammicine. The protein is Geissoschizine oxidase of Alstonia scholaris (Dogbane).